Here is a 314-residue protein sequence, read N- to C-terminus: Methionyl-tRNA formyltransferase (314 aa).

A (6S)-5,6,7,8-tetrahydrofolate-binding site is contributed by 110–113 (SLLP).

This sequence belongs to the Fmt family.

The enzyme catalyses L-methionyl-tRNA(fMet) + (6R)-10-formyltetrahydrofolate = N-formyl-L-methionyl-tRNA(fMet) + (6S)-5,6,7,8-tetrahydrofolate + H(+). Functionally, attaches a formyl group to the free amino group of methionyl-tRNA(fMet). The formyl group appears to play a dual role in the initiator identity of N-formylmethionyl-tRNA by promoting its recognition by IF2 and preventing the misappropriation of this tRNA by the elongation apparatus. The protein is Methionyl-tRNA formyltransferase of Lactobacillus johnsonii (strain CNCM I-12250 / La1 / NCC 533).